Here is a 349-residue protein sequence, read N- to C-terminus: UDP-galactose/UDP-glucose transporter 4 (349 aa).

Helical transmembrane passes span 23-43 (WQQF…NGIC), 56-76 (GWYF…MYGF), 115-135 (IMFK…IPGL), 140-160 (PVHE…FTLA), 167-187 (NFSI…AFLG), 205-225 (MLFC…ILTG), 248-268 (AMAT…FGAA), and 293-313 (LTEQ…LKMV). Positions 316-349 (PNPNPKSSGSGQTPGKLERVKFEKEDDEESRPLV) are disordered. Over residues 340–349 (EDDEESRPLV) the composition is skewed to acidic residues.

It belongs to the nucleotide-sugar transporter family. UDP-galactose:UMP antiporter (TC 2.A.7.11) subfamily.

It localises to the membrane. Its function is as follows. Sugar transporter involved in the transport of nucleotide-sugars from cytoplasm into the Golgi and/or the endoplasmic reticulum. The polypeptide is UDP-galactose/UDP-glucose transporter 4 (Arabidopsis thaliana (Mouse-ear cress)).